Consider the following 142-residue polypeptide: Galactose-6-phosphate isomerase subunit LacA (142 aa).

It belongs to the LacAB/RpiB family. Heteromultimeric protein consisting of LacA and LacB.

The enzyme catalyses aldehydo-D-galactose 6-phosphate = keto-D-tagatose 6-phosphate. It functions in the pathway carbohydrate metabolism; D-galactose 6-phosphate degradation; D-tagatose 6-phosphate from D-galactose 6-phosphate: step 1/1. In Enterococcus faecalis (strain ATCC 700802 / V583), this protein is Galactose-6-phosphate isomerase subunit LacA.